Reading from the N-terminus, the 376-residue chain is MNYNSINLVKTHLINYPCPLNINFLWNYGFLLGIIFFIQILTGVFLASRYSPEISYAYYSIQHILRELWSGWCFRYMHATGASLVFFLTYLHILRGLNYSYLYLPLSWISGLIIFALFIVTAFIGYVLPWGQMSYWGATVITNLLSGIPSLVIWLCGGYTVSDPTIKRFFVLHFILPFVALCIVFIHIFFLHLHGSTNPLGYDTALKIPFYPNLLSLDVKGFNNILILFLIQSIFGVIPLSHPDNAIVVNTYVTPLQIVPEWYFLPFYAMLKTIPSKNAGLVIVIASLQLLFLLAEQRNLTTIIQFKMVFSAREYSVPIIWFMCSFYALLWIGCPLPQDIFILYGRLFIILFFSSGLFSLVQNKKTHYDYSSQANI.

Helical transmembrane passes span 28–48 (YGFLLGIIFFIQILTGVFLAS), 72–94 (WCFRYMHATGASLVFFLTYLHIL), 107–127 (SWISGLIIFALFIVTAFIGYV), and 169–189 (FFVLHFILPFVALCIVFIHIF). Heme b contacts are provided by His-78 and His-92. Heme b-binding residues include His-173 and His-187. Residue His-192 participates in a ubiquinone binding. The next 4 membrane-spanning stretches (helical) occupy residues 214–234 (LLSLDVKGFNNILILFLIQSI), 274–294 (IPSKNAGLVIVIASLQLLFLL), 317–337 (VPIIWFMCSFYALLWIGCPLP), and 340–360 (IFILYGRLFIILFFSSGLFSL).

This sequence belongs to the cytochrome b family. The main subunits of complex b-c1 are: cytochrome b, cytochrome c1 and the Rieske protein. Requires heme b as cofactor.

It is found in the mitochondrion inner membrane. Its function is as follows. Component of the ubiquinol-cytochrome c reductase complex (complex III or cytochrome b-c1 complex) that is part of the mitochondrial respiratory chain. The b-c1 complex mediates electron transfer from ubiquinol to cytochrome c. Contributes to the generation of a proton gradient across the mitochondrial membrane that is then used for ATP synthesis. This Plasmodium berghei protein is Cytochrome b (MT-CYB).